Reading from the N-terminus, the 435-residue chain is Enolase (435 aa).

(2R)-2-phosphoglycerate is bound at residue Q163. Residue E205 is the Proton donor of the active site. Mg(2+)-binding residues include D243, E292, and D319. Residues K344, R373, S374, and K395 each contribute to the (2R)-2-phosphoglycerate site. Residue K344 is the Proton acceptor of the active site.

It belongs to the enolase family. Mg(2+) serves as cofactor.

It localises to the cytoplasm. The protein resides in the secreted. It is found in the cell surface. The enzyme catalyses (2R)-2-phosphoglycerate = phosphoenolpyruvate + H2O. It functions in the pathway carbohydrate degradation; glycolysis; pyruvate from D-glyceraldehyde 3-phosphate: step 4/5. In terms of biological role, catalyzes the reversible conversion of 2-phosphoglycerate (2-PG) into phosphoenolpyruvate (PEP). It is essential for the degradation of carbohydrates via glycolysis. In Streptococcus pyogenes serotype M12 (strain MGAS2096), this protein is Enolase.